The primary structure comprises 61 residues: Small ribosomal subunit protein uS14 (61 aa).

Cys-24, Cys-27, Cys-40, and Cys-43 together coordinate Zn(2+).

This sequence belongs to the universal ribosomal protein uS14 family. Zinc-binding uS14 subfamily. In terms of assembly, part of the 30S ribosomal subunit. Contacts proteins S3 and S10. It depends on Zn(2+) as a cofactor.

Its function is as follows. Binds 16S rRNA, required for the assembly of 30S particles and may also be responsible for determining the conformation of the 16S rRNA at the A site. In Acetivibrio thermocellus (strain ATCC 27405 / DSM 1237 / JCM 9322 / NBRC 103400 / NCIMB 10682 / NRRL B-4536 / VPI 7372) (Clostridium thermocellum), this protein is Small ribosomal subunit protein uS14.